Here is a 506-residue protein sequence, read N- to C-terminus: Probable lipid II flippase MurJ (506 aa).

The next 13 membrane-spanning stretches (helical) occupy residues 4 to 24, 86 to 106, 127 to 147, 153 to 173, 181 to 201, 232 to 252, 263 to 283, 308 to 328, 345 to 365, 377 to 397, 405 to 425, 436 to 456, and 474 to 494; these read YVVS…MGFV, TVIT…IIFA, VFGY…FVSV, IFFI…LSIF, IYSA…IPFA, IFGF…ASTL, AVVY…TVIF, ILLL…DYIL, TASV…FGFF, TPFY…VFGI, LALA…FIIL, ILFV…IYFF, and LMAA…VLGI.

The protein belongs to the MurJ/MviN family.

It localises to the cell inner membrane. Its pathway is cell wall biogenesis; peptidoglycan biosynthesis. Its function is as follows. Involved in peptidoglycan biosynthesis. Transports lipid-linked peptidoglycan precursors from the inner to the outer leaflet of the cytoplasmic membrane. The chain is Probable lipid II flippase MurJ from Borreliella burgdorferi (strain ATCC 35210 / DSM 4680 / CIP 102532 / B31) (Borrelia burgdorferi).